The chain runs to 399 residues: Tyrosine--tRNA ligase (399 aa).

The short motif at 42–51 (PTAPDLHLGH) is the 'HIGH' region element. Residues 226 to 230 (KMSKS) carry the 'KMSKS' region motif. An ATP-binding site is contributed by Lys-229. Residues 336-396 (MPIAAVLNKA…GRKAFARITL (61 aa)) enclose the S4 RNA-binding domain.

Belongs to the class-I aminoacyl-tRNA synthetase family. TyrS type 2 subfamily. Homodimer.

It localises to the cytoplasm. The enzyme catalyses tRNA(Tyr) + L-tyrosine + ATP = L-tyrosyl-tRNA(Tyr) + AMP + diphosphate + H(+). Its function is as follows. Catalyzes the attachment of tyrosine to tRNA(Tyr) in a two-step reaction: tyrosine is first activated by ATP to form Tyr-AMP and then transferred to the acceptor end of tRNA(Tyr). The chain is Tyrosine--tRNA ligase from Pseudomonas fluorescens (strain ATCC BAA-477 / NRRL B-23932 / Pf-5).